The sequence spans 433 residues: Trigger factor (433 aa).

In terms of domain architecture, PPIase FKBP-type spans 165 to 250 (GDSAIIDFEG…LHNIQEKVKV (86 aa)).

This sequence belongs to the FKBP-type PPIase family. Tig subfamily.

Its subcellular location is the cytoplasm. The catalysed reaction is [protein]-peptidylproline (omega=180) = [protein]-peptidylproline (omega=0). In terms of biological role, involved in protein export. Acts as a chaperone by maintaining the newly synthesized protein in an open conformation. Functions as a peptidyl-prolyl cis-trans isomerase. This is Trigger factor from Sulfurimonas denitrificans (strain ATCC 33889 / DSM 1251) (Thiomicrospira denitrificans (strain ATCC 33889 / DSM 1251)).